Consider the following 196-residue polypeptide: Probable GTP-binding protein EngB (196 aa).

In terms of domain architecture, EngB-type G spans 22–195 (KLPEVALAGR…WNWIESITKV (174 aa)). GTP-binding positions include 30 to 37 (GRSNVGKS), 57 to 61 (GKTQT), 75 to 78 (DVPG), 142 to 145 (TKID), and 174 to 176 (FSA). Mg(2+) contacts are provided by Ser-37 and Thr-59.

The protein belongs to the TRAFAC class TrmE-Era-EngA-EngB-Septin-like GTPase superfamily. EngB GTPase family. Mg(2+) serves as cofactor.

In terms of biological role, necessary for normal cell division and for the maintenance of normal septation. The chain is Probable GTP-binding protein EngB from Ligilactobacillus salivarius (strain UCC118) (Lactobacillus salivarius).